The following is a 626-amino-acid chain: Glucoamylase (626 aa).

An N-terminal signal peptide occupies residues M1–G19. Residues L20–R35 constitute a propeptide that is removed on maturation. The N-linked (GlcNAc...) asparagine glycan is linked to N106. Residue W155 participates in substrate binding. N206 carries an N-linked (GlcNAc...) asparagine glycan. D211 (proton acceptor) is an active-site residue. The active-site Proton donor is E214. N217 is a glycosylation site (N-linked (GlcNAc...) asparagine). The CBM20 domain maps to C520–R626.

The protein belongs to the glycosyl hydrolase 15 family.

The catalysed reaction is Hydrolysis of terminal (1-&gt;4)-linked alpha-D-glucose residues successively from non-reducing ends of the chains with release of beta-D-glucose.. This chain is Glucoamylase (gla-1), found in Neurospora crassa (strain ATCC 24698 / 74-OR23-1A / CBS 708.71 / DSM 1257 / FGSC 987).